The chain runs to 287 residues: MKTRDMNRDWIATAATLNAALPYLQRYDDAIVVIKLGGHAMGSDEAMESFARDVVLLRQVGVNPVVVHGGGPMINAMLKKLDIQSEFVNGKRVTDVATVEVVEMVLSGVVNKRIVQEINRQGGKAVGLSGKDANLMICDQTNPDLGFVGTPTEMNPDLLRNLFAHDIIPVIAPLGAGREGETFNVNGDTAAGAIAAALKADRLLLLTDVSGVKNGEGEVLTELKAGQIREMIADGTIAGGMIPKTETALDALDNGVRAVVILDGRVDNAVLLELYTEHGAGSLIRRD.

Substrate-binding positions include 70–71, Arg92, and Asn184; that span reads GG.

It belongs to the acetylglutamate kinase family. ArgB subfamily.

It localises to the cytoplasm. It catalyses the reaction N-acetyl-L-glutamate + ATP = N-acetyl-L-glutamyl 5-phosphate + ADP. The protein operates within amino-acid biosynthesis; L-arginine biosynthesis; N(2)-acetyl-L-ornithine from L-glutamate: step 2/4. Catalyzes the ATP-dependent phosphorylation of N-acetyl-L-glutamate. The protein is Acetylglutamate kinase of Ruegeria pomeroyi (strain ATCC 700808 / DSM 15171 / DSS-3) (Silicibacter pomeroyi).